A 196-amino-acid chain; its full sequence is Carnitine operon protein CaiE (196 aa).

The segment at 173-196 (TQPLRQMEGNRPRLQGTTDVAPKR) is disordered.

Belongs to the transferase hexapeptide repeat family.

Its pathway is amine and polyamine metabolism; carnitine metabolism. Its function is as follows. Overproduction of CaiE stimulates the activity of CaiB and CaiD. The polypeptide is Carnitine operon protein CaiE (Escherichia coli (strain SMS-3-5 / SECEC)).